The primary structure comprises 259 residues: Protein-tyrosine phosphatase RolB (259 aa).

The disordered stretch occupies residues glycine 219 to alanine 259.

The enzyme catalyses O-phospho-L-tyrosyl-[protein] + H2O = L-tyrosyl-[protein] + phosphate. Functionally, induces differentiation and growth of neoplastic roots (hairy roots). Seems to function as a tyrosine phosphatase. The polypeptide is Protein-tyrosine phosphatase RolB (rolB) (Rhizobium rhizogenes (Agrobacterium rhizogenes)).